Here is a 360-residue protein sequence, read N- to C-terminus: Protein Wnt-2 (360 aa).

The signal sequence occupies residues 1–26 (MNSSSLFGIWLSVPLILSWVTPQVSS). Intrachain disulfides connect cysteine 76/cysteine 87, cysteine 127/cysteine 135, cysteine 137/cysteine 157, cysteine 206/cysteine 220, cysteine 208/cysteine 215, cysteine 278/cysteine 309, cysteine 294/cysteine 304, cysteine 308/cysteine 348, cysteine 324/cysteine 339, cysteine 326/cysteine 336, and cysteine 331/cysteine 332. Residue serine 212 is the site of O-palmitoleoyl serine; by PORCN attachment. A glycan (N-linked (GlcNAc...) asparagine) is linked at asparagine 295.

Belongs to the Wnt family. Post-translationally, palmitoleoylation is required for efficient binding to frizzled receptors. Depalmitoleoylation leads to Wnt signaling pathway inhibition.

The protein localises to the secreted. It is found in the extracellular space. The protein resides in the extracellular matrix. In terms of biological role, ligand for members of the frizzled family of seven transmembrane receptors. Functions in the canonical Wnt signaling pathway that results in activation of transcription factors of the TCF/LEF family. Functions as a upstream regulator of FGF10 expression. Plays an important role in embryonic lung development. May contribute to embryonic brain development by regulating the proliferation of dopaminergic precursors and neurons. In Monodelphis domestica (Gray short-tailed opossum), this protein is Protein Wnt-2 (WNT2).